The primary structure comprises 312 residues: Ribonuclease Z (312 aa).

Zn(2+) is bound by residues histidine 62, histidine 64, aspartate 66, histidine 67, histidine 144, aspartate 215, and histidine 273. Aspartate 66 serves as the catalytic Proton acceptor.

The protein belongs to the RNase Z family. As to quaternary structure, homodimer. Zn(2+) serves as cofactor.

It catalyses the reaction Endonucleolytic cleavage of RNA, removing extra 3' nucleotides from tRNA precursor, generating 3' termini of tRNAs. A 3'-hydroxy group is left at the tRNA terminus and a 5'-phosphoryl group is left at the trailer molecule.. Zinc phosphodiesterase, which displays some tRNA 3'-processing endonuclease activity. Probably involved in tRNA maturation, by removing a 3'-trailer from precursor tRNA. In Prochlorococcus marinus subsp. pastoris (strain CCMP1986 / NIES-2087 / MED4), this protein is Ribonuclease Z.